The sequence spans 925 residues: Protein translocase subunit SecA (925 aa).

ATP contacts are provided by residues Q87, 105–109, and D531; that span reads GEGKT. The segment at 867-909 is disordered; that stretch reads AAGADMRFQHSQPESVLHKPEAGEGEEAQPFRRETPKVGRNDP. The span at 895–906 shows a compositional bias: basic and acidic residues; the sequence is QPFRRETPKVGR. The Zn(2+) site is built by C910, C912, C921, and H922.

This sequence belongs to the SecA family. Monomer and homodimer. Part of the essential Sec protein translocation apparatus which comprises SecA, SecYEG and auxiliary proteins SecDF-YajC and YidC. Zn(2+) is required as a cofactor.

It is found in the cell inner membrane. The protein localises to the cytoplasm. The catalysed reaction is ATP + H2O + cellular proteinSide 1 = ADP + phosphate + cellular proteinSide 2.. Part of the Sec protein translocase complex. Interacts with the SecYEG preprotein conducting channel. Has a central role in coupling the hydrolysis of ATP to the transfer of proteins into and across the cell membrane, serving both as a receptor for the preprotein-SecB complex and as an ATP-driven molecular motor driving the stepwise translocation of polypeptide chains across the membrane. The sequence is that of Protein translocase subunit SecA from Thioalkalivibrio sulfidiphilus (strain HL-EbGR7).